A 445-amino-acid polypeptide reads, in one-letter code: Exodeoxyribonuclease 7 large subunit (445 aa).

It belongs to the XseA family. Heterooligomer composed of large and small subunits.

The protein localises to the cytoplasm. The catalysed reaction is Exonucleolytic cleavage in either 5'- to 3'- or 3'- to 5'-direction to yield nucleoside 5'-phosphates.. Its function is as follows. Bidirectionally degrades single-stranded DNA into large acid-insoluble oligonucleotides, which are then degraded further into small acid-soluble oligonucleotides. This Shewanella pealeana (strain ATCC 700345 / ANG-SQ1) protein is Exodeoxyribonuclease 7 large subunit.